Reading from the N-terminus, the 428-residue chain is Putative zinc finger protein 355P (428 aa).

One can recognise a KRAB domain in the interval 1-64 (MRDEVAEKEK…KHPGLTQHNI (64 aa)). C2H2-type zinc fingers lie at residues 72–94 (YKCK…QRIH), 100–122 (YKCE…MRAH), and 128–150 (YKCE…KRIH). A C2H2-type 4; degenerate zinc finger spans residues 156-178 (YKFEECDKAFYWVLSFTKHMIIH). The C2H2-type 5; degenerate zinc finger occupies 184–206 (YKYQECGKAFKWSSNLTIHKRIH). A C2H2-type 6; degenerate zinc finger spans residues 212 to 234 (CKCEECGKACKQSLGLTIQKRIH). The C2H2-type 7; degenerate zinc-finger motif lies at 263-285 (YNCEKCGKAFYCSSNLIQNNIVH). C2H2-type zinc fingers lie at residues 291-313 (YKCQ…KIIH) and 335-357 (YKCE…MIVH). Residues 363 to 385 (YKCEECGKAFKWSSELTIHQRIR) form a C2H2-type 10; degenerate zinc finger. Residues 391-413 (YKCEECVRVFKHSSKLNEHKRNH) form a C2H2-type 11 zinc finger.

Belongs to the krueppel C2H2-type zinc-finger protein family.

It is found in the nucleus. Functionally, may be involved in transcriptional regulation. In Homo sapiens (Human), this protein is Putative zinc finger protein 355P (ZNF355P).